Consider the following 231-residue polypeptide: tRNA (guanine-N(1)-)-methyltransferase (231 aa).

Residues Gly114 and 134–139 (IGDYVL) contribute to the S-adenosyl-L-methionine site.

Belongs to the RNA methyltransferase TrmD family. As to quaternary structure, homodimer.

The protein resides in the cytoplasm. It catalyses the reaction guanosine(37) in tRNA + S-adenosyl-L-methionine = N(1)-methylguanosine(37) in tRNA + S-adenosyl-L-homocysteine + H(+). Specifically methylates guanosine-37 in various tRNAs. This Clostridioides difficile (strain 630) (Peptoclostridium difficile) protein is tRNA (guanine-N(1)-)-methyltransferase.